The following is a 185-amino-acid chain: Ribosome-recycling factor (185 aa).

The segment at 143–163 is disordered; that stretch reads RKDGEAGEDEVARAEKDLDKS.

The protein belongs to the RRF family.

It is found in the cytoplasm. In terms of biological role, responsible for the release of ribosomes from messenger RNA at the termination of protein biosynthesis. May increase the efficiency of translation by recycling ribosomes from one round of translation to another. This Mycobacterium ulcerans (strain Agy99) protein is Ribosome-recycling factor.